The sequence spans 809 residues: Integrin beta pat-3 (809 aa).

The signal sequence occupies residues M1–P19. At A20 to P737 the chain is on the extracellular side. N-linked (GlcNAc...) asparagine glycans are attached at residues N47, N141, N269, N373, and N400. The region spanning D153–D352 is the VWFA domain. 15 disulfide bridges follow: C476–C496, C489–C499, C501–C510, C512–C543, C526–C541, C535–C546, C548–C563, C565–C586, C570–C584, C578–C589, C591–C600, C602–C625, C609–C623, C617–C628, and C630–C644. 4 consecutive I-EGF domains span residues C476 to E511, C512 to E564, C565 to E601, and C602 to E645. N-linked (GlcNAc...) asparagine glycosylation is present at N530. N-linked (GlcNAc...) asparagine glycosylation is found at N672, N693, and N721. A helical transmembrane segment spans residues V738–L758. The Cytoplasmic segment spans residues L759–N809. Y792 bears the Phosphotyrosine mark.

This sequence belongs to the integrin beta chain family. In terms of assembly, heterodimer of an alpha and a beta subunit. Interacts with alpha subunit ina-1. Interacts with alpha subunit pat-2. Component of an integrin containing attachment complex, composed of at least pat-2, pat-3, pat-4, pat-6, unc-52, unc-97 and unc-112. May interact with tns-1 (via C-terminus). Phosphorylated. Dephosphorylated by dep-1. Expressed in body wall muscles (at protein level). Expressed in gonadal sheath cells and spermatheca. Expressed in vulval cells and along the basal laminae that separate the vulval cells from the uterus (at the protein level).

It localises to the cell membrane. The protein resides in the lateral cell membrane. The protein localises to the basolateral cell membrane. It is found in the cytoplasm. Its subcellular location is the myofibril. It localises to the sarcomere. The protein resides in the m line. The protein localises to the cell junction. It is found in the focal adhesion. Functionally, integrin alpha ina-1/beta pat-3 is a receptor for laminin. Integrin alpha pat-2/beta pat-3 recognizes the sequence R-G-D in its ligands. Plays a role in cell migration, morphogenesis and probably in cell-cell interactions. During gonad morphogenesis, involved in distal tip cell (DTC)-mediated guidance of gonad elongation, in maintaining their sharp tapering morphology and in their migration. Component of an integrin containing attachment complex, which is required for muscle development and maintenance. Involved in the assembly of dense bodies and M lines during body wall muscle embryonic development by recruiting one of their components, cpna-1, to integrin-mediated attachment sites. May play a similar role in the assembly of dense bodies in gonadal myoepithelial sheath cells. Probably by acting as a receptor for apoptotic cells, plays a role in the clearance of apoptotic cells during mid-embryogenesis. Required for ovulation. Dephosphorylated, probably within the alpha pat-2/beta pat-3 integrin receptor complex, by the phosphatase dep-1, which leads to down-stream effects including the negative regulation of let-23 signaling and vulval induction. When unphosphosphorylated, recruits the cytoplasmic adapter protein tln-1 to the plasma membrane of secondary vulval precursor cells. This promotes the linking of focal adhesion sites to the F-actin cytoskeleton, and it also acts to restrict the mobility of the let-23 receptor on the plasma membrane of vulval cells which thereby attenuates let-23 signaling. Plays a role in axon regeneration after injury. The protein is Integrin beta pat-3 of Caenorhabditis elegans.